A 532-amino-acid polypeptide reads, in one-letter code: MEMKQMKFLTHQAFFSSVRSGDLSQLQQLVDNLTGDELIDESSPCSAVAELMSVQNDAGETAVYISAAENLEDIFRYLIRFSSLETVKIRSKSDMNAFHVAAKRGHLGIVKELLRLWPELCRICDASNTSPLYAAAVQDHLEIVNAMLDVDPSCAMIVRKNGKTSLHTAGRYGLLRIVKALIEKDAAIVGVKDKKGQTALHMAVKGRSLEVVEEILQADYTILNERDRKGNTALHIATRKARPQITSLLLTFTAIEVNAINNQKETAMDLADKLQYSESALEINEALVEAGAKHGRFIGREDEARALKRAVSDIKHEVQSQLLQNEKTNRRVSGIAKELRKLHREAVQNTTNSITVVAVLFASIAFLAIFNLPGQYFTEGSHVGQANIAGRTGFRVFCLLNATSLFISLAVVVVQITLVAWDTRAQKKVVSVVNKLMWAACACTFGAFLAIAFAVVGKGNSWMAITITLLGAPILVGTLASMCYFVFRQRFRSGNDSQRRIRRGSSKSFSWSYSHHVSDFEDESDFEKIIAL.

ANK repeat units lie at residues 9 to 38, 58 to 89, 93 to 122, 127 to 156, 161 to 190, 195 to 224, and 229 to 259; these read LTHQAFFSSVRSGDLSQLQQLVDNLTGDEL, AGETAVYISAAENLEDIFRYLIRFSSLETVKI, SDMNAFHVAAKRGHLGIVKELLRLWPELCR, SNTSPLYAAAVQDHLEIVNAMLDVDPSCAM, NGKTSLHTAGRYGLLRIVKALIEKDAAIVG, KGQTALHMAVKGRSLEVVEEILQADYTILN, and KGNTALHIATRKARPQITSLLLTFTAIEVNA. The next 4 helical transmembrane spans lie at 354-374, 396-416, 436-456, and 467-487; these read ITVVAVLFASIAFLAIFNLPG, VFCLLNATSLFISLAVVVVQI, LMWAACACTFGAFLAIAFAVV, and ITLLGAPILVGTLASMCYFVF.

It is found in the membrane. The chain is Ankyrin repeat-containing protein At2g01680 from Arabidopsis thaliana (Mouse-ear cress).